We begin with the raw amino-acid sequence, 882 residues long: Translation initiation factor IF-2 (882 aa).

Residues 57–211 form a disordered region; it reads YIPANKTKDK…KDKSKPKVAT (155 aa). A compositionally biased stretch (basic and acidic residues) spans 104–115; sequence TTSEKQKDKGEQ. Residues 199–211 show a composition bias toward basic residues; that stretch reads RHKKDKSKPKVAT. The tr-type G domain occupies 381–550; it reads ERPPVVTIMG…LIQAEVLELK (170 aa). Residues 390–397 form a G1 region; the sequence is GHVDHGKT. 390 to 397 is a binding site for GTP; it reads GHVDHGKT. The segment at 415-419 is G2; the sequence is GITQH. Positions 436 to 439 are G3; that stretch reads DTPG. Residues 436-440 and 490-493 each bind GTP; these read DTPGH and NKMD. Positions 490 to 493 are G4; it reads NKMD. A G5 region spans residues 526 to 528; it reads SAK.

The protein belongs to the TRAFAC class translation factor GTPase superfamily. Classic translation factor GTPase family. IF-2 subfamily.

It localises to the cytoplasm. One of the essential components for the initiation of protein synthesis. Protects formylmethionyl-tRNA from spontaneous hydrolysis and promotes its binding to the 30S ribosomal subunits. Also involved in the hydrolysis of GTP during the formation of the 70S ribosomal complex. This is Translation initiation factor IF-2 from Helicobacter hepaticus (strain ATCC 51449 / 3B1).